The following is a 143-amino-acid chain: Sirohydrochlorin cobaltochelatase (143 aa).

Residue H9 is the Proton acceptor of the active site. Residue H9 participates in Co(2+) binding. Residue H9 participates in Ni(2+) binding. Substrate is bound by residues E45 and 70–75; that span reads LAHGNH. H75 serves as a coordination point for Co(2+). Position 75 (H75) interacts with Ni(2+).

The protein belongs to the CbiX family. CbiXS subfamily. Homotetramer; dimer of dimers.

It catalyses the reaction Co-sirohydrochlorin + 2 H(+) = sirohydrochlorin + Co(2+). The enzyme catalyses Ni-sirohydrochlorin + 2 H(+) = sirohydrochlorin + Ni(2+). Its pathway is cofactor biosynthesis; adenosylcobalamin biosynthesis; cob(II)yrinate a,c-diamide from sirohydrochlorin (anaerobic route): step 1/10. In terms of biological role, catalyzes the insertion of Co(2+) into sirohydrochlorin as part of the anaerobic pathway to cobalamin biosynthesis. Involved in the biosynthesis of the unique nickel-containing tetrapyrrole coenzyme F430, the prosthetic group of methyl-coenzyme M reductase (MCR), which plays a key role in methanogenesis and anaerobic methane oxidation. Catalyzes the insertion of Ni(2+) into sirohydrochlorin to yield Ni-sirohydrochlorin. This chain is Sirohydrochlorin cobaltochelatase, found in Methanococcus aeolicus (strain ATCC BAA-1280 / DSM 17508 / OCM 812 / Nankai-3).